Consider the following 2469-residue polypeptide: MDIHPLFKKLNLEGIASTHQADEKYGQYAGSQCLSNCVMFLVSSYYNDETPVTSLHGLNEILKYGAKIDFILRRSGQLGHNQYAQLHHIPGYIAGPKWACFIYQSIEMFGMLGHESPINEPFVASLKSLLSKNYNTTVQYFLAICNSKSMGILIKDKKIFIFDPHSCPLVPNSPAHVFSTSNVNDAIEYLSPPNVQYTGSFLYFVPKEYIGHSHYIMNHYRVINYEKLHGPNIDLTSQEGLIIEISPPNTPKPTSTQKPPKTPRTPKPATPKAPKTPRKPKTPKESTIPYDKSKKPPKIPKTSKKSKKVLTKDTALTPQHKTIEEHLRELLPPITETVEDNTLFNHPVERTTPGTDSLLSGINSTTKREDDLEDDDNVTSKLKEDEDDWIDDIPIPEVLDTETTHSDQETIYMIGDENIHDWSYSDDDIDDTLDISFIQLDNLITSLDNIPKNNTFPRIIDKTSNQPIKEGKALHSIDRILKNIVLEHGLITSSSISISKCKSLLQFVILWGEKLSIPTRDLKTILKTELIITEIAEIALTKLTNDTFRNNVITKLNKCMLKLKSESVDSYKHLSALLNNIILKIQTIDTEIELKTLSTVFTSELGKDFSVVCTKKESETIMAAIKNLKEKISTRKQELHTEENYFQSVLIAMETFQPIPLPTRVIEIQPSKKAQQLHEKSKLVEQKLTIDANNVLTDLLHTMKQDKTDISPAPDFTTVLKNIQSTLQLLQTCVTDLNIDKKFISNTVQQLSYIGWEVAELSHSQWNFPKADPVIPLKILDDIKKEIQQVTTKQKNEETLSKILADVQTLLENAKQSDTLSIPILQHYITKAGTLVGERENQKFESLKNTVQKLSTSEEFLKTLIDSTTLENVQLQIQEISDILQSNQYIHQSETIKQAFFDKSNTIINNILQLINQQKYTTVTQPMLIAVKRFLSEAKFRESNTICEIISTLVSLGSLLSKSTTVEALKDALKSIDTLKEKLTAVDRPLKRELYNVIRKLQKQLKTLLEQQEFDNWKMEVDSFVPTPSRDVKTFIQNAPSMKAKQYAKKALKDQIQAMEIDVDPESVIEDNIKANGQKAWQKIQSAFQDLNFSILIPDDWLSLAKEYTRPKSTLFTVIGPILLKFVEEVLESVKNLKEAKLKSLLPNGPVFTPPKFDWIHYYESNVNFHLKTINLPKVSTVAHNIGHELSLLSQALNSKTLPEAVVGTSLEQHAAKFSCMFKTLEATWHDHQVDTRTKIDEYIEDLRNDTKKHIVAPQIQSPNRFLSPEDIQEINSLPKLFRDSLLENESRLLASQKNEFQMLENTVKAAELQYKATQEDIISNMSEAINSLLPLAPAYILAIPTIPTDPLKYVENIIQDKRLLNTEPYQITIECLNWLNTACKTLLSICPKSQKQRLVVLDQSINTHLNITQQFYNLEKTANTTDDLSVLQNAISTLDLKRVQGGKATVDSWQSKLQQMKAMLDNISKSAQTLASLDILWGTALTSVSTAHLGELLQKADPLQKDIESLSSTNTDLLSRVTELIHFIKFKRGFLSYYEEGQKEVFQRYPLTQNIRPSQPTEINNLLRLALFVLLKNKDASAWIWTETLPLVDSNKLAYVPPNKGPLYTCSQYLKLLEAQLLDPSLSKVILSDNRPLAGIAQARLGIDSTVLLARAFPDIQKHAEEVLTAYKNSIVSHTQNEFMAMTIVCHMIKIIMNDFYPQNFNINTVPIYVNHTKLLQIILTMWPRLIKASLCQQSFQEATSLLQTTLKPLFLKITDLTLENNIYNPASHCSDALLFFPQKWKSINIQSIMWEHPSFLAICKNKSRARITFLALAFKIIDPTILNQLWTSLNPANTSDSTSYSLLLNHLVATEFDKNVPSTFLEPGNPSLAYAYGTQTGNIIGTKSYVPQKSPPISVTAFEIALGALIFQVPVKLFVTDKTPVLSSPELGDMLIVSELLDCTGTTEPFKTMIEAPKSSLSTNLNKQYVSPPHELEVFSRQASWLQHILSSSNFKNNIVATIDYSTTFLNAYVVPEKLPFKQESFCFIPKIDSLQWPNNTFTTFLPLVEMPSNIELHYAKVTEPFNKTVLSTMFNVFPTHILPTQEEHDQSISSKSPTFKIEHDYNTNSVYNNHINNINLTNNSTYHQYKDVLPQPLADKLSYEPKDLQNLASTTEPQIEDIFSELSIKETDNTAKAPLLYPQKQPKTKKFLSPVHTKHKTSNSIIFEENTTVKVQPNTCIQHSDLHKDTNTPRQQISNAPCFIPNHKVPVIIKPSQEKLKANTVHTNTDDLSPKKPQILIANNNNIFKQSDKQHKHQYTQISKPKIFINQDSNNPIKQPHHNPPQPLIKPTDPQQLTLSNDIISSDQTTKNLNVQRKPIIVIPNNNYALNQVQKLSNLPSIKTKPYITLKDIQSNSKTLYDESPITIPILEHLDIEPIVSISYLEKRVDETKFIILEFIKHTKQNIIKTTNLLIHQIMKIKTLYL.

The tract at residues 1-237 is deubiquitination activity; the sequence is MDIHPLFKKL…LHGPNIDLTS (237 aa). A Peptidase C76 domain is found at 13–225; that stretch reads EGIASTHQAD…IMNHYRVINY (213 aa). Residues Cys33, Asp163, and His165 contribute to the active site. 2 disordered regions span residues 244–318 and 346–377; these read EISP…ALTP and HPVE…DDDN. Pro residues predominate over residues 260-271; the sequence is PKTPRTPKPATP. Ser286 is a region of interest (interaction with inner tegument protein). A compositionally biased stretch (basic residues) spans 295–309; that stretch reads KPPKIPKTSKKSKKV. The span at 352-365 shows a compositional bias: polar residues; the sequence is TPGTDSLLSGINST.

This sequence belongs to the herpesviridae large tegument protein family. In terms of assembly, interacts with host CUL1 and CUL4A; these interactions inhibit the E3 ligase activity of cullins. Interacts with inner tegument protein. Interacts with capsid vertex specific component CVC2. Interacts with the major capsid protein/MCP.

Its subcellular location is the virion tegument. It is found in the host cytoplasm. The protein resides in the host nucleus. The enzyme catalyses Thiol-dependent hydrolysis of ester, thioester, amide, peptide and isopeptide bonds formed by the C-terminal Gly of ubiquitin (a 76-residue protein attached to proteins as an intracellular targeting signal).. In terms of biological role, large tegument protein that plays multiple roles in the viral cycle. During viral entry, remains associated with the capsid while most of the tegument is detached and participates in the capsid transport toward the host nucleus. Plays a role in the routing of the capsid at the nuclear pore complex and subsequent uncoating. Within the host nucleus, acts as a deneddylase and promotes the degradation of nuclear CRLs (cullin-RING ubiquitin ligases) and thereby stabilizes nuclear CRL substrates, while cytoplasmic CRLs remain unaffected. These modifications prevent host cell cycle S-phase progression and create a favorable environment allowing efficient viral genome replication. Participates later in the secondary envelopment of capsids. Indeed, plays a linker role for the association of the outer viral tegument to the capsids together with the inner tegument protein. The chain is Large tegument protein deneddylase (64) from Saimiriine herpesvirus 2 (strain 11) (SaHV-2).